The sequence spans 313 residues: B3 domain-containing transcription factor FUS3 (313 aa).

The segment at residues 92–194 is a DNA-binding region (TF-B3); it reads FQKELKNSDV…NYVIQARKAS (103 aa).

As to quaternary structure, interacts with KIN10. Phosphorylation by KIN10 increases its stability. Phosphorylated at one or more of the Ser-55, Ser-56 and/or Ser-57 residues. Expressed in cotyledons and hypocotyls.

Its subcellular location is the nucleus. With respect to regulation, phosphorylation by KIN10 is required to positively regulates embryogenesis, seed yield, and plant growth at high temperature. In terms of biological role, transcription regulator involved in gene regulation during late embryogenesis. Its expression to the epidermis is sufficient to control foliar organ identity by regulating positively the synthesis abscisic acid (ABA) and negatively gibberellin production. Negatively regulates TTG1 in the embryo. Positively regulates the abundance of the ABI3 protein in the seed. Cooperates with KIN10 to regulate developmental phase transitions and lateral organ development and act both as positive regulators of abscisic acid (ABA) signaling during germination. In Arabidopsis thaliana (Mouse-ear cress), this protein is B3 domain-containing transcription factor FUS3 (FUS3).